The chain runs to 157 residues: Ribosomal RNA large subunit methyltransferase H (157 aa).

S-adenosyl-L-methionine-binding positions include Leu-74, Gly-106, and 125–130 (LSDMTL).

The protein belongs to the RNA methyltransferase RlmH family. In terms of assembly, homodimer.

Its subcellular location is the cytoplasm. The enzyme catalyses pseudouridine(1915) in 23S rRNA + S-adenosyl-L-methionine = N(3)-methylpseudouridine(1915) in 23S rRNA + S-adenosyl-L-homocysteine + H(+). In terms of biological role, specifically methylates the pseudouridine at position 1915 (m3Psi1915) in 23S rRNA. This is Ribosomal RNA large subunit methyltransferase H from Desulfovibrio desulfuricans (strain ATCC 27774 / DSM 6949 / MB).